Here is a 331-residue protein sequence, read N- to C-terminus: Mitochondrial glycine transporter (331 aa).

Solcar repeat units follow at residues 19–103 (SRTT…LRQG), 132–216 (LSNW…LKRR), and 234–318 (SSSS…LILR). Helical transmembrane passes span 25-50 (FAAG…TRVQ), 78-104 (GTLP…RQGL), 138-163 (LATG…VRYE), 191-214 (GFGA…EQLK), 238-264 (INFV…KTRL), and 293-311 (GLGL…AWTV).

The protein belongs to the mitochondrial carrier (TC 2.A.29) family. SLC25A38 subfamily.

The protein resides in the mitochondrion inner membrane. It catalyses the reaction glycine(in) = glycine(out). In terms of biological role, mitochondrial glycine transporter that imports glycine into the mitochondrial matrix. Plays an important role in providing glycine for the first enzymatic step in heme biosynthesis, the condensation of glycine with succinyl-CoA to produce 5-aminolevulinate (ALA) in the mitochondrial matrix. This chain is Mitochondrial glycine transporter, found in Neosartorya fischeri (strain ATCC 1020 / DSM 3700 / CBS 544.65 / FGSC A1164 / JCM 1740 / NRRL 181 / WB 181) (Aspergillus fischerianus).